Consider the following 205-residue polypeptide: Holliday junction branch migration complex subunit RuvA (205 aa).

The tract at residues methionine 1 to alanine 64 is domain I. The segment at glutamate 65 to threonine 143 is domain II. The tract at residues leucine 144–serine 154 is flexible linker. The segment at serine 154–lysine 205 is domain III.

The protein belongs to the RuvA family. As to quaternary structure, homotetramer. Forms an RuvA(8)-RuvB(12)-Holliday junction (HJ) complex. HJ DNA is sandwiched between 2 RuvA tetramers; dsDNA enters through RuvA and exits via RuvB. An RuvB hexamer assembles on each DNA strand where it exits the tetramer. Each RuvB hexamer is contacted by two RuvA subunits (via domain III) on 2 adjacent RuvB subunits; this complex drives branch migration. In the full resolvosome a probable DNA-RuvA(4)-RuvB(12)-RuvC(2) complex forms which resolves the HJ.

The protein resides in the cytoplasm. Its function is as follows. The RuvA-RuvB-RuvC complex processes Holliday junction (HJ) DNA during genetic recombination and DNA repair, while the RuvA-RuvB complex plays an important role in the rescue of blocked DNA replication forks via replication fork reversal (RFR). RuvA specifically binds to HJ cruciform DNA, conferring on it an open structure. The RuvB hexamer acts as an ATP-dependent pump, pulling dsDNA into and through the RuvAB complex. HJ branch migration allows RuvC to scan DNA until it finds its consensus sequence, where it cleaves and resolves the cruciform DNA. This Pseudomonas putida (strain ATCC 47054 / DSM 6125 / CFBP 8728 / NCIMB 11950 / KT2440) protein is Holliday junction branch migration complex subunit RuvA.